A 636-amino-acid polypeptide reads, in one-letter code: Polyadenylate-binding protein 1 (636 aa).

N-acetylmethionine is present on Met-1. RRM domains follow at residues 11–89 (ASLY…WSQR), 99–175 (GNIF…RFKS), 191–268 (TNVY…RAQK), and 294–370 (VNLY…LAQR). The tract at residues 166 to 289 (RKVFVGRFKS…FEQMKQDRIT (124 aa)) is CSDE1-binding. The residue at position 299 (Lys-299) is an N6-methyllysine. Phosphoserine is present on Ser-315. Residue Thr-319 is modified to Phosphothreonine. Omega-N-methylarginine occurs at positions 385, 419, 432, and 436. Omega-N-methylated arginine; by CARM1 is present on residues Arg-455 and Arg-460. Arg-475 and Arg-481 each carry omega-N-methylarginine. Residue Arg-493 is modified to Asymmetric dimethylarginine; alternate. Arg-493 is modified (dimethylated arginine; alternate). Arg-493 is subject to Omega-N-methylarginine; alternate. Residue Arg-506 is modified to Omega-N-methylarginine. At Lys-512 the chain carries N6-acetyllysine. An Omega-N-methylarginine modification is found at Arg-518. The PABC domain maps to 542 to 619 (QEPLTASMLA…AVAVLQAHQA (78 aa)).

The protein belongs to the polyadenylate-binding protein type-1 family. As to quaternary structure, may form homodimers. Component of a multisubunit autoregulatory ribonucleoprotein complex (ARC), at least composed of IGF2BP1, PABPC1 and CSDE1. Directly interacts with IGF2BP1. Part of a complex associated with the FOS mCRD domain and consisting of HNRPD, SYNCRIP, PAIP1 and CSDE1/UNR. Interacts with PAIP1 and PAIP2 (via the PABPC1-interacting motifs PAM1 and PAM2). Interacts with PAIP1 with a 1:1 stoichiometry and with PAIP2 with a 1:2 stoichiometry. The interaction with CSDE1 is direct and RNA-independent. Found in a mRNP complex with YBX2. Interacts with TENT2/GLD2. Identified in the spliceosome C complex. Identified in a mRNP complex, at least composed of DHX9, DDX3X, ELAVL1, HNRNPU, IGF2BP1, ILF3, PABPC1, PCBP2, PTBP2, STAU1, STAU2, SYNCRIP and YBX1. The interaction with DDX3X is direct and RNA-independent. This interaction increases in stressed cells and decreases during cell recovery. Identified in a IGF2BP1-dependent mRNP granule complex containing untranslated mRNAs. Interacts with NXF1/TAP. Interacts with PIWIL1. Interacts with AGO1, AGO2, GSPT1 and GSPT2. Interacts with LARP4B. Interacts (via the second and third RRM domains and the C-terminus) with PAIP2B (via central acidic portion and C-terminus). Forms a complex with LARP1 and SHFL. Interacts with LARP4. Interacts with ZFC3H1 in a RNase-sensitive manner. Interacts with TRIM71 (via NHL repeats) in an RNA-dependent manner. Interacts with TENT5C; the interaction has no effect on TENT5C poly(A) polymerase function. Interacts with G3BP1 and G3BP2. Interacts with ENDOV; the interaction is RNA-dependent and stimulates ENDOV activity. Interacts with UPF1; the interaction is RNA-dependent. Interacts with IGF2BP2 and IGF2BP3. May interact with SETX. Interacts with RBM46. Interacts with PAN3. Post-translationally, phosphorylated by MAPKAPK2. In terms of processing, methylated by CARM1. Arg-493 is dimethylated, probably to asymmetric dimethylarginine.

It is found in the cytoplasm. It localises to the stress granule. The protein resides in the nucleus. The protein localises to the cell projection. Its subcellular location is the lamellipodium. Functionally, binds the poly(A) tail of mRNA, including that of its own transcript, and regulates processes of mRNA metabolism such as pre-mRNA splicing and mRNA stability. Its function in translational initiation regulation can either be enhanced by PAIP1 or repressed by PAIP2. Can probably bind to cytoplasmic RNA sequences other than poly(A) in vivo. Binds to N6-methyladenosine (m6A)-containing mRNAs and contributes to MYC stability by binding to m6A-containing MYC mRNAs. Involved in translationally coupled mRNA turnover. Implicated with other RNA-binding proteins in the cytoplasmic deadenylation/translational and decay interplay of the FOS mRNA mediated by the major coding-region determinant of instability (mCRD) domain. Involved in regulation of nonsense-mediated decay (NMD) of mRNAs containing premature stop codons; for the recognition of premature termination codons (PTC) and initiation of NMD a competitive interaction between UPF1 and PABPC1 with the ribosome-bound release factors is proposed. By binding to long poly(A) tails, may protect them from uridylation by ZCCHC6/ZCCHC11 and hence contribute to mRNA stability. The polypeptide is Polyadenylate-binding protein 1 (PABPC1) (Bos taurus (Bovine)).